The sequence spans 184 residues: MKKQDISVKTVVAIGIGAAVFVILGRFVVIPTGFPNTNIETSYAFLALISAIFGPFAGLMTGLVGHAIKDFTTYGSAWWSWVICSGIIGCLYGWIGLKLNLSSGLFSRKSMIYFNIGQIIANIICWALIAPTLDILIYNEPANKVYTQGVISAVLNIISVGIIGTILLKAYASSQIKKGSLRKE.

5 consecutive transmembrane segments (helical) span residues 11–31, 44–64, 77–97, 111–131, and 148–168; these read VVAIGIGAAVFVILGRFVVIP, AFLALISAIFGPFAGLMTGLV, AWWSWVICSGIIGCLYGWIGL, MIYFNIGQIIANIICWALIAP, and QGVISAVLNIISVGIIGTILL.

Belongs to the UPF0397 family.

The protein localises to the cell membrane. The protein is UPF0397 protein SA2477 of Staphylococcus aureus (strain N315).